Consider the following 893-residue polypeptide: UPF0182 protein CLB_0018 (893 aa).

Transmembrane regions (helical) follow at residues isoleucine 9 to isoleucine 29, alanine 49 to tyrosine 69, leucine 94 to tyrosine 114, valine 154 to glutamate 174, leucine 202 to tryptophan 222, phenylalanine 246 to valine 266, and valine 273 to leucine 293.

This sequence belongs to the UPF0182 family.

It localises to the cell membrane. The sequence is that of UPF0182 protein CLB_0018 from Clostridium botulinum (strain ATCC 19397 / Type A).